Reading from the N-terminus, the 202-residue chain is Small ribosomal subunit protein uS4c (202 aa).

The S4 RNA-binding domain maps to 90-153; it reads MRLDNVIFRL…KSETIISKNI (64 aa).

Belongs to the universal ribosomal protein uS4 family. Part of the 30S ribosomal subunit. Contacts protein S5. The interaction surface between S4 and S5 is involved in control of translational fidelity.

Its subcellular location is the plastid. It localises to the chloroplast. In terms of biological role, one of the primary rRNA binding proteins, it binds directly to 16S rRNA where it nucleates assembly of the body of the 30S subunit. Its function is as follows. With S5 and S12 plays an important role in translational accuracy. This Hylocomium splendens (Glittering wood-moss) protein is Small ribosomal subunit protein uS4c (rps4).